A 274-amino-acid polypeptide reads, in one-letter code: Putative pyruvate, phosphate dikinase regulatory protein 1 (274 aa).

Position 149–156 (149–156) interacts with ADP; that stretch reads GISRTSKT.

Belongs to the pyruvate, phosphate/water dikinase regulatory protein family. PDRP subfamily.

It catalyses the reaction N(tele)-phospho-L-histidyl/L-threonyl-[pyruvate, phosphate dikinase] + ADP = N(tele)-phospho-L-histidyl/O-phospho-L-threonyl-[pyruvate, phosphate dikinase] + AMP + H(+). It carries out the reaction N(tele)-phospho-L-histidyl/O-phospho-L-threonyl-[pyruvate, phosphate dikinase] + phosphate + H(+) = N(tele)-phospho-L-histidyl/L-threonyl-[pyruvate, phosphate dikinase] + diphosphate. Functionally, bifunctional serine/threonine kinase and phosphorylase involved in the regulation of the pyruvate, phosphate dikinase (PPDK) by catalyzing its phosphorylation/dephosphorylation. This Listeria monocytogenes serotype 4b (strain F2365) protein is Putative pyruvate, phosphate dikinase regulatory protein 1.